Here is a 157-residue protein sequence, read N- to C-terminus: Ubiquitin-like protein 4A (157 aa).

Positions 1–76 constitute a Ubiquitin-like domain; that stretch reads MQLTVKALQG…LNLVVKPLEK (76 aa). A Glycyl lysine isopeptide (Lys-Gly) (interchain with G-Cter in ubiquitin) cross-link involves residue Lys-48. Ser-90 is modified (phosphoserine). Residues 96-138 are required and sufficient for interaction with BAG6; sequence WQLISKVLARHFSVADASRVLEQLQRDYDRSLSRLTLDDIERL.

As to quaternary structure, component of the BAG6/BAT3 complex, at least composed of BAG6, UBL4A and GET4/TRC35. Interacts with BAG6; the interaction is direct and required for UBL4A protein stability. Interacts with USP13; may be indirect via BAG6. Post-translationally, polyubiquitinated. Ubiquitination by AMFR and deubiquitination by USP13 may regulate the interaction between the BAG6/BAT3 complex and SGTA and therefore may regulate client proteins fate.

It localises to the cytoplasm. It is found in the cytosol. The protein localises to the nucleus. Its function is as follows. As part of a cytosolic protein quality control complex, the BAG6/BAT3 complex, maintains misfolded and hydrophobic patches-containing proteins in a soluble state and participates in their proper delivery to the endoplasmic reticulum or alternatively can promote their sorting to the proteasome where they undergo degradation. The BAG6/BAT3 complex is involved in the post-translational delivery of tail-anchored/type II transmembrane proteins to the endoplasmic reticulum membrane. Recruited to ribosomes, it interacts with the transmembrane region of newly synthesized tail-anchored proteins and together with SGTA and ASNA1 mediates their delivery to the endoplasmic reticulum. Client proteins that cannot be properly delivered to the endoplasmic reticulum are ubiquitinated and sorted to the proteasome. Similarly, the BAG6/BAT3 complex also functions as a sorting platform for proteins of the secretory pathway that are mislocalized to the cytosol either delivering them to the proteasome for degradation or to the endoplasmic reticulum. The BAG6/BAT3 complex also plays a role in the endoplasmic reticulum-associated degradation (ERAD), a quality control mechanism that eliminates unwanted proteins of the endoplasmic reticulum through their retrotranslocation to the cytosol and their targeting to the proteasome. It maintains these retrotranslocated proteins in an unfolded yet soluble state condition in the cytosol to ensure their proper delivery to the proteasome. The protein is Ubiquitin-like protein 4A of Mus musculus (Mouse).